A 197-amino-acid chain; its full sequence is dTTP/UTP pyrophosphatase (197 aa).

Asp69 acts as the Proton acceptor in catalysis.

Belongs to the Maf family. YhdE subfamily. A divalent metal cation serves as cofactor.

Its subcellular location is the cytoplasm. The enzyme catalyses dTTP + H2O = dTMP + diphosphate + H(+). The catalysed reaction is UTP + H2O = UMP + diphosphate + H(+). In terms of biological role, nucleoside triphosphate pyrophosphatase that hydrolyzes dTTP and UTP. May have a dual role in cell division arrest and in preventing the incorporation of modified nucleotides into cellular nucleic acids. This Lachnoclostridium phytofermentans (strain ATCC 700394 / DSM 18823 / ISDg) (Clostridium phytofermentans) protein is dTTP/UTP pyrophosphatase.